The sequence spans 306 residues: Methionyl-tRNA formyltransferase (306 aa).

108-111 (SLLP) provides a ligand contact to (6S)-5,6,7,8-tetrahydrofolate.

Belongs to the Fmt family.

The enzyme catalyses L-methionyl-tRNA(fMet) + (6R)-10-formyltetrahydrofolate = N-formyl-L-methionyl-tRNA(fMet) + (6S)-5,6,7,8-tetrahydrofolate + H(+). In terms of biological role, attaches a formyl group to the free amino group of methionyl-tRNA(fMet). The formyl group appears to play a dual role in the initiator identity of N-formylmethionyl-tRNA by promoting its recognition by IF2 and preventing the misappropriation of this tRNA by the elongation apparatus. The polypeptide is Methionyl-tRNA formyltransferase (Pseudarthrobacter chlorophenolicus (strain ATCC 700700 / DSM 12829 / CIP 107037 / JCM 12360 / KCTC 9906 / NCIMB 13794 / A6) (Arthrobacter chlorophenolicus)).